Reading from the N-terminus, the 94-residue chain is Large ribosomal subunit protein uL23 (94 aa).

This sequence belongs to the universal ribosomal protein uL23 family. Part of the 50S ribosomal subunit. Contacts protein L29, and trigger factor when it is bound to the ribosome.

Functionally, one of the early assembly proteins it binds 23S rRNA. One of the proteins that surrounds the polypeptide exit tunnel on the outside of the ribosome. Forms the main docking site for trigger factor binding to the ribosome. In Geobacter sulfurreducens (strain ATCC 51573 / DSM 12127 / PCA), this protein is Large ribosomal subunit protein uL23.